Consider the following 88-residue polypeptide: MLNTKFDELMEFPCAFPFKVVGDAHEALTDRVVAVVQRHAPGDYSPTVKASSKGSYYSVTIRVTVTSKDHIETLYTELAGIEGVRRVL.

It belongs to the UPF0250 family.

In Shewanella sp. (strain MR-4), this protein is UPF0250 protein Shewmr4_0986.